A 600-amino-acid polypeptide reads, in one-letter code: Proline--tRNA ligase (600 aa).

It belongs to the class-II aminoacyl-tRNA synthetase family. ProS type 1 subfamily. As to quaternary structure, homodimer.

The protein localises to the cytoplasm. The catalysed reaction is tRNA(Pro) + L-proline + ATP = L-prolyl-tRNA(Pro) + AMP + diphosphate. Functionally, catalyzes the attachment of proline to tRNA(Pro) in a two-step reaction: proline is first activated by ATP to form Pro-AMP and then transferred to the acceptor end of tRNA(Pro). As ProRS can inadvertently accommodate and process non-cognate amino acids such as alanine and cysteine, to avoid such errors it has two additional distinct editing activities against alanine. One activity is designated as 'pretransfer' editing and involves the tRNA(Pro)-independent hydrolysis of activated Ala-AMP. The other activity is designated 'posttransfer' editing and involves deacylation of mischarged Ala-tRNA(Pro). The misacylated Cys-tRNA(Pro) is not edited by ProRS. This is Proline--tRNA ligase from Prochlorococcus marinus subsp. pastoris (strain CCMP1986 / NIES-2087 / MED4).